A 259-amino-acid chain; its full sequence is Deoxyribose-phosphate aldolase (259 aa).

Asp102 acts as the Proton donor/acceptor in catalysis. The active-site Schiff-base intermediate with acetaldehyde is the Lys167. The active-site Proton donor/acceptor is the Lys201.

Belongs to the DeoC/FbaB aldolase family. DeoC type 2 subfamily.

The protein resides in the cytoplasm. The catalysed reaction is 2-deoxy-D-ribose 5-phosphate = D-glyceraldehyde 3-phosphate + acetaldehyde. The protein operates within carbohydrate degradation; 2-deoxy-D-ribose 1-phosphate degradation; D-glyceraldehyde 3-phosphate and acetaldehyde from 2-deoxy-alpha-D-ribose 1-phosphate: step 2/2. In terms of biological role, catalyzes a reversible aldol reaction between acetaldehyde and D-glyceraldehyde 3-phosphate to generate 2-deoxy-D-ribose 5-phosphate. The polypeptide is Deoxyribose-phosphate aldolase (Escherichia coli O1:K1 / APEC).